Reading from the N-terminus, the 944-residue chain is UvrABC system protein A (944 aa).

33–40 (GLSGSGKS) is an ATP binding site. The C4-type zinc-finger motif lies at 252-279 (CPICGFSIGELEPRMFSFNSPFGACPTC). 2 ABC transporter domains span residues 309–587 (WEPT…KKSL) and 607–935 (ITDR…QYLK). Position 639–646 (639–646 (GVSGSGKS)) interacts with ATP. The segment at 738 to 764 (CEACKGDGIIKIEMHFLPDVYVPCEVC) adopts a C4-type zinc-finger fold.

This sequence belongs to the ABC transporter superfamily. UvrA family. Forms a heterotetramer with UvrB during the search for lesions.

It localises to the cytoplasm. Its function is as follows. The UvrABC repair system catalyzes the recognition and processing of DNA lesions. UvrA is an ATPase and a DNA-binding protein. A damage recognition complex composed of 2 UvrA and 2 UvrB subunits scans DNA for abnormalities. When the presence of a lesion has been verified by UvrB, the UvrA molecules dissociate. The protein is UvrABC system protein A of Staphylococcus epidermidis (strain ATCC 12228 / FDA PCI 1200).